The chain runs to 449 residues: LGNRWSAIAIPRRTDNEIKNYWNTHLKKRLMQMGIDPVTHKSTAAEELVHYSIIPGLRPVVSTNLTHMSQWDSARAEAEARLSRQSSLTSPASDLAQTSLEHQKSNLSTKNDVNNQVASSNFMSSWKAQVTETLRPNFGVVELDKPPASPVNLQKFLQEWESSLKAPQPEMEGPSIHDSITNIPSLSSGTASELVSTQYSPDVSSASYRMPVSSMILPSPAQISERLMASRHCDSLLPLPRIDLAGSNIFPAQSPSATESSFSFSGLCKVDNEHQYSPTSILHGPSGHDSSYSSPCGSSSSAYDSVDILAQTFSLVHNDNHQHSRATLAMNFSQEPSFWTQQQVALVDALQPESYFTHELGVNIAQKPPSHSFNLSVNSMVNQVGVPNNIPFHSLIICVESIFVAYFRRSRCTSIANLHMFFVFRFYFYLFYFSFDFYRVPLRRRKSQW.

One can recognise an HTH myb-type domain in the interval 1-30 (LGNRWSAIAIPRRTDNEIKNYWNTHLKKRL). The H-T-H motif DNA-binding region spans 5-26 (WSAIAIPRRTDNEIKNYWNTHL).

It is found in the nucleus. Functionally, possible transcription activator. The protein is Myb-related protein Pp1 (PP1) of Physcomitrium patens (Spreading-leaved earth moss).